The sequence spans 279 residues: MTKADLLFKDNITKIMSEGVFSEQARPRYKNGEMANSKYITGAFAEYDLSKGEFPITTLRPIPIKSAIKEIFWIYQDQTNDLVVLNDKYGVTYWNDWEVGHTGTIGQRYGAVVKKHNIISKLLKQLEDNPWNRRNVISLWDYEAFEETEGLLPCAFQTMFDVRRVNGELYLDATLTQRSNDMLVAHHINAMQYVALQMMIAKHFGWRVGKFFYFINNLHIYDNQFEQAQELLKRQPSECNPKLVLNVPDGTDFFDIKPDDFALVDYDPIKPQLRFDLAI.

133–134 (RR) lines the dUMP pocket. Cys-154 serves as the catalytic Nucleophile. DUMP contacts are provided by residues 178 to 181 (RSND), Asn-189, and 219 to 221 (HIY). Asp-181 serves as a coordination point for (6R)-5,10-methylene-5,6,7,8-tetrahydrofolate. Ala-278 serves as a coordination point for (6R)-5,10-methylene-5,6,7,8-tetrahydrofolate.

This sequence belongs to the thymidylate synthase family. Bacterial-type ThyA subfamily. In terms of assembly, homodimer.

The protein localises to the cytoplasm. It catalyses the reaction dUMP + (6R)-5,10-methylene-5,6,7,8-tetrahydrofolate = 7,8-dihydrofolate + dTMP. Its pathway is pyrimidine metabolism; dTTP biosynthesis. Its function is as follows. Catalyzes the reductive methylation of 2'-deoxyuridine-5'-monophosphate (dUMP) to 2'-deoxythymidine-5'-monophosphate (dTMP) while utilizing 5,10-methylenetetrahydrofolate (mTHF) as the methyl donor and reductant in the reaction, yielding dihydrofolate (DHF) as a by-product. This enzymatic reaction provides an intracellular de novo source of dTMP, an essential precursor for DNA biosynthesis. This is Thymidylate synthase from Streptococcus agalactiae serotype Ia (strain ATCC 27591 / A909 / CDC SS700).